Consider the following 157-residue polypeptide: 2-C-methyl-D-erythritol 2,4-cyclodiphosphate synthase (157 aa).

Asp-8 and His-10 together coordinate a divalent metal cation. 4-CDP-2-C-methyl-D-erythritol 2-phosphate-binding positions include 8–10 (DVH) and 34–35 (HS). Residue His-42 participates in a divalent metal cation binding. 4-CDP-2-C-methyl-D-erythritol 2-phosphate contacts are provided by residues 56-58 (DIG), 61-65 (FPDTD), 100-106 (AQAPKMA), 132-135 (TTTE), Phe-139, and Arg-142.

The protein belongs to the IspF family. As to quaternary structure, homotrimer. A divalent metal cation is required as a cofactor.

It carries out the reaction 4-CDP-2-C-methyl-D-erythritol 2-phosphate = 2-C-methyl-D-erythritol 2,4-cyclic diphosphate + CMP. It participates in isoprenoid biosynthesis; isopentenyl diphosphate biosynthesis via DXP pathway; isopentenyl diphosphate from 1-deoxy-D-xylulose 5-phosphate: step 4/6. In terms of biological role, involved in the biosynthesis of isopentenyl diphosphate (IPP) and dimethylallyl diphosphate (DMAPP), two major building blocks of isoprenoid compounds. Catalyzes the conversion of 4-diphosphocytidyl-2-C-methyl-D-erythritol 2-phosphate (CDP-ME2P) to 2-C-methyl-D-erythritol 2,4-cyclodiphosphate (ME-CPP) with a corresponding release of cytidine 5-monophosphate (CMP). The protein is 2-C-methyl-D-erythritol 2,4-cyclodiphosphate synthase of Pseudomonas aeruginosa (strain UCBPP-PA14).